Reading from the N-terminus, the 442-residue chain is tRNA modification GTPase MnmE (442 aa).

Residues arginine 27, glutamate 84, and lysine 124 each coordinate (6S)-5-formyl-5,6,7,8-tetrahydrofolate. The 146-residue stretch at 221 to 366 (GLHVVIVGAP…LLTNLQNFAE (146 aa)) folds into the TrmE-type G domain. GTP contacts are provided by residues 231–236 (NAGKSS), 250–256 (SEEAGTT), and 275–278 (DTAG). Residues serine 235 and threonine 256 each contribute to the Mg(2+) site. Lysine 442 provides a ligand contact to (6S)-5-formyl-5,6,7,8-tetrahydrofolate.

The protein belongs to the TRAFAC class TrmE-Era-EngA-EngB-Septin-like GTPase superfamily. TrmE GTPase family. In terms of assembly, homodimer. Heterotetramer of two MnmE and two MnmG subunits. The cofactor is K(+).

It localises to the cytoplasm. In terms of biological role, exhibits a very high intrinsic GTPase hydrolysis rate. Involved in the addition of a carboxymethylaminomethyl (cmnm) group at the wobble position (U34) of certain tRNAs, forming tRNA-cmnm(5)s(2)U34. The protein is tRNA modification GTPase MnmE of Brucella anthropi (strain ATCC 49188 / DSM 6882 / CCUG 24695 / JCM 21032 / LMG 3331 / NBRC 15819 / NCTC 12168 / Alc 37) (Ochrobactrum anthropi).